Here is a 188-residue protein sequence, read N- to C-terminus: Josephin-2 (188 aa).

The Josephin domain occupies 11–188 (PPSVYHERQR…EEAGCWLNTS (178 aa)). Cys24 acts as the Nucleophile in catalysis. The Proton acceptor role is filled by His125.

The protein resides in the cytoplasm. The protein localises to the cytosol. The enzyme catalyses Thiol-dependent hydrolysis of ester, thioester, amide, peptide and isopeptide bonds formed by the C-terminal Gly of ubiquitin (a 76-residue protein attached to proteins as an intracellular targeting signal).. Functionally, cleaves 'Lys-63'-linked poly-ubiquitin chains, and with lesser efficiency 'Lys-48'-linked poly-ubiquitin chains (in vitro). May act as a deubiquitinating enzyme. This chain is Josephin-2 (Josd2), found in Mus musculus (Mouse).